Consider the following 286-residue polypeptide: PTS system mannose-specific EIID component (286 aa).

N-formylmethionine is present on Met-1. Residues Met-1 to Thr-17 are Cytoplasmic-facing. The PTS EIID domain maps to Lys-14–Leu-284. The stretch at Gln-18 to Arg-55 is an intramembrane region. Over Leu-56–Glu-62 the chain is Cytoplasmic. An intramembrane segment occupies Ala-63 to Gln-95. Residues Arg-96–Asp-103 lie on the Cytoplasmic side of the membrane. Over Asp-104–Met-143 the chain traverses the membrane. Residues Ser-144 to Leu-147 lie on the Periplasmic side of the membrane. The segment at Leu-148–Gly-176 is a transmembrane helix. At Ile-177–Gly-186 the chain is on the cytoplasmic side. A membrane pass occupies residues Phe-187 to His-212. The Periplasmic segment spans residues Val-213 to Gly-244. The segment at Leu-245–Leu-258 is a transmembrane helix. Residues Arg-259 to Pro-264 lie on the Cytoplasmic side of the membrane. At Leu-265–Leu-283 the chain is embedded in the membrane. Topologically, residues Leu-284 to Leu-286 are periplasmic.

In terms of assembly, homotrimer of protomers that are composed of two subunits, IIC and IID.

It localises to the cell inner membrane. Functionally, the phosphoenolpyruvate-dependent sugar phosphotransferase system (sugar PTS), a major carbohydrate active transport system, catalyzes the phosphorylation of incoming sugar substrates concomitantly with their translocation across the cell membrane. The enzyme II ManXYZ PTS system is involved in mannose transport. This chain is PTS system mannose-specific EIID component (manZ), found in Escherichia coli O6:H1 (strain CFT073 / ATCC 700928 / UPEC).